A 67-amino-acid chain; its full sequence is Penaeidin-4a (67 aa).

The signal sequence occupies residues 1–19 (MRLVVCLVFLASFALVCQG). 3 cysteine pairs are disulfide-bonded: Cys42–Cys56, Cys45–Cys63, and Cys57–Cys64. Arg66 carries the post-translational modification Arginine amide.

Belongs to the penaeidin family.

It localises to the cytoplasmic granule. Antibacterial and antifungal activity. Presents chitin-binding activity. In Penaeus vannamei (Whiteleg shrimp), this protein is Penaeidin-4a.